Reading from the N-terminus, the 345-residue chain is Myb/SANT-like DNA-binding domain-containing protein 4 (345 aa).

In terms of domain architecture, Myb-like spans Leu-4 to Arg-77. Lys-9 is covalently cross-linked (Glycyl lysine isopeptide (Lys-Gly) (interchain with G-Cter in SUMO2)). Ser-106 carries the phosphoserine modification. Residues Lys-114 and Lys-142 each participate in a glycyl lysine isopeptide (Lys-Gly) (interchain with G-Cter in SUMO2) cross-link. The tract at residues Val-143 to Asn-175 is disordered. At Thr-188 the chain carries Phosphothreonine. Residues Leu-203 to Gln-345 adopt a coiled-coil conformation. Residues Lys-237, Lys-254, and Lys-273 each participate in a glycyl lysine isopeptide (Lys-Gly) (interchain with G-Cter in SUMO2) cross-link.

In Homo sapiens (Human), this protein is Myb/SANT-like DNA-binding domain-containing protein 4 (MSANTD4).